A 272-amino-acid chain; its full sequence is Indole-3-glycerol phosphate synthase (272 aa).

It belongs to the TrpC family.

The enzyme catalyses 1-(2-carboxyphenylamino)-1-deoxy-D-ribulose 5-phosphate + H(+) = (1S,2R)-1-C-(indol-3-yl)glycerol 3-phosphate + CO2 + H2O. It functions in the pathway amino-acid biosynthesis; L-tryptophan biosynthesis; L-tryptophan from chorismate: step 4/5. The sequence is that of Indole-3-glycerol phosphate synthase from Mycolicibacterium gilvum (strain PYR-GCK) (Mycobacterium gilvum (strain PYR-GCK)).